The following is a 148-amino-acid chain: Snaclec flavocetin-A subunit beta (148 aa).

An N-terminal signal peptide occupies residues 1 to 23 (MGQFIFVSFGFLVVATSLSGTEA). 3 cysteine pairs are disulfide-bonded: Cys27–Cys38, Cys55–Cys144, and Cys121–Cys136. The C-type lectin domain occupies 34–145 (YDEHCYQVFQ…CSSKRYVVCK (112 aa)).

The protein belongs to the snaclec family. In terms of assembly, tetramer of heterodimers of alpha and beta subunits (alphabeta)(4); disulfide-linked. As to expression, expressed by the venom gland.

It is found in the secreted. Strong platelet aggregation inhibitor. Binds specifically to platelet glycoprotein Ibalpha (GP1BA) with high affinity and inhibits vWF-dependent platelet aggregation. Has also been observed to induce small agglutinates in washed platelets by binding to GPIb. The protein is Snaclec flavocetin-A subunit beta of Protobothrops flavoviridis (Habu).